The following is a 728-amino-acid chain: Cytosolic endo-beta-N-acetylglucosaminidase (728 aa).

Residues 287–381 (QNRVFFDACD…NFLLNEDKFW (95 aa)) enclose the BRCT domain.

Belongs to the glycosyl hydrolase 85 family.

It is found in the cytoplasm. Its subcellular location is the cytosol. The enzyme catalyses an N(4)-(oligosaccharide-(1-&gt;3)-[oligosaccharide-(1-&gt;6)]-beta-D-Man-(1-&gt;4)-beta-D-GlcNAc-(1-&gt;4)-alpha-D-GlcNAc)-L-asparaginyl-[protein] + H2O = an oligosaccharide-(1-&gt;3)-[oligosaccharide-(1-&gt;6)]-beta-D-Man-(1-&gt;4)-D-GlcNAc + N(4)-(N-acetyl-beta-D-glucosaminyl)-L-asparaginyl-[protein]. Its function is as follows. Endoglycosidase that releases N-glycans from glycoproteins by cleaving the beta-1,4-glycosidic bond in the N,N'-diacetylchitobiose core. Involved in the processing of free oligosaccharides in the cytosol. The polypeptide is Cytosolic endo-beta-N-acetylglucosaminidase (ENGASE) (Gallus gallus (Chicken)).